Consider the following 437-residue polypeptide: MDHVSLSLWSAPRAQAPVDAVVTLPGSKSITNRALILAALADGPSTITGALRSRDADLMIAALRDLGIGVEEAGDPTTLRITPGPLRGGEVDCGLAGTVMRFLPPLAAMADGIVRFDGDEQARTRPLGTILEALRGLGARIEGDALPFTVTGTGSLRGGTVTIDASGSSQFVSGLLLSAAAFEEGVTVHHDGKPVPSMPHIDMTVEMLRQSGVSVTTPATGGDADTWRVAPGPVRAVDWAIEPDLSNATPFLAAAAVTGGTVSVPMWPSSTTQPGDAIRGILASMGADVTLADGVLTVRGPEKLRGIDIDLHDVGELTPTVAALAALAEGTSHLRGIAHLRGHETDRLAALADEINKLGGSVTETDDGLTIVPAELHGGQWLSYADHRMATAGAIIGLVVDGVDVDDVGTTAKTLPGFENMWIDMLESSPATPKASF.

Residues Lys-28, Ser-29, and Arg-33 each contribute to the 3-phosphoshikimate site. Lys-28 contributes to the phosphoenolpyruvate binding site. Phosphoenolpyruvate is bound by residues Gly-97 and Arg-125. Residues Ser-168, Ser-169, Gln-170, Glu-316, and His-343 each contribute to the 3-phosphoshikimate site. Gln-170 contributes to the phosphoenolpyruvate binding site. The Proton acceptor role is filled by Glu-316. Positions 347, 388, and 413 each coordinate phosphoenolpyruvate.

This sequence belongs to the EPSP synthase family. In terms of assembly, monomer.

The protein localises to the cytoplasm. It catalyses the reaction 3-phosphoshikimate + phosphoenolpyruvate = 5-O-(1-carboxyvinyl)-3-phosphoshikimate + phosphate. It participates in metabolic intermediate biosynthesis; chorismate biosynthesis; chorismate from D-erythrose 4-phosphate and phosphoenolpyruvate: step 6/7. Catalyzes the transfer of the enolpyruvyl moiety of phosphoenolpyruvate (PEP) to the 5-hydroxyl of shikimate-3-phosphate (S3P) to produce enolpyruvyl shikimate-3-phosphate and inorganic phosphate. This is 3-phosphoshikimate 1-carboxyvinyltransferase from Rhodococcus erythropolis (strain PR4 / NBRC 100887).